The following is a 1203-amino-acid chain: MIDVNNFEYMKIGLASPDKIRSWSYGEVKKPETINYRTLKPEKDGLFCERIFGPQKDWECHCGKYKRVRYKGVVCDRCGVEVTRAKVRRERMGHIELAAPVSHIWYFKGIPSRMGLVLDMSPRALEEVIYFASYVVTESGDTPLDKKQLLSEKEYRAYRDRYGSTFQAAMGAEAIKKLLQDIDLDKEVDFLKEELKTAQGQRRTRAIKRLEVLEAFRNSGNEPSWMILDVLPVIPPELRPMVQLDGGRFATSDLNDLYRRVINRNNRLKRLLDLGAPSIIVQNEKRMLQEAVDALIDNGRRGRPVTGPGNRPLKSLSHMLKGKQGRFRQNLLGKRVDYSGRSVIVVGPNLKMYQCGLPKEMALELFKPFVMKELVEKGLAHNIKSAKRKIERVQPEVWDVLESVIKEHPVLLNRAPTLHRLGIQAFEPTLVEGRAIRLHPLVCTAYNADFDGDQMAVHVPLSSEAQAEARLLMLAAQNILNPKDGKPVVTPSQDMVLGNYYLTLEREGAIGEGMVFKDANEALLAYQNGYVHLHTRVAVAASAVNNATFTEEQKNMLLLTTVGKLIFNEILPESFPYINEPTNSNLEKETPAKYFVEKGANIKEIIASREEVAPFSKKILGNIIAEVFKRFKITETSRMLDRMKNLGFKYSTKAGITVGVSDILVLGEKDEILHEAQAKVDNVIKQFRRGLITEEERYDRVISIWSNAKDVIQGKLMKSLNKRNPIFMMSDSGARGNASNFTQLAGMRGLMANPSGRIIELPIKSSFREGLTVLEYFISTHGARKGLADTALKTADSGYLTRRLVDVAQDVIVREDDCGTDRGLLIGAIKEGNEVIESLYDRLVGRFARKTVKHPETGEVLVAENQLITEDIAHIVENSGVETVNIRSAFTCNTRHGVCKKCYGRNLATGTDVEVGEAVGIIAAQSIGEPGTQLTMRTFHTGGVAGDDITQGLPRIQEIFEARNPKGQAVISEIDGVIAAINDVKDRQEVVVQGEVEARTYAIPYGARLKVIPGQKISHGKELTEGSIDPKELLKVTDITAVQEYLLREVQKVYRMQGVEIGDKHVEVMVRQMLRKVRVSDAGETDVLPGTLLDIHQFTDANAKVLLQGKQPATARPVLLGITKASLETDSFLSAASFQETTRVLTDAAIKGKRDELLGLKENVIIGKLVPAGTGMNRYRKVDLVKTTQDDMNVENDEVYVEQ.

Zn(2+)-binding residues include C60, C62, C75, and C78. Residues D449, D451, and D453 each contribute to the Mg(2+) site. The Zn(2+) site is built by C818, C892, C899, and C902.

This sequence belongs to the RNA polymerase beta' chain family. The RNAP catalytic core consists of 2 alpha, 1 beta, 1 beta' and 1 omega subunit. When a sigma factor is associated with the core the holoenzyme is formed, which can initiate transcription. It depends on Mg(2+) as a cofactor. Requires Zn(2+) as cofactor.

It carries out the reaction RNA(n) + a ribonucleoside 5'-triphosphate = RNA(n+1) + diphosphate. Its function is as follows. DNA-dependent RNA polymerase catalyzes the transcription of DNA into RNA using the four ribonucleoside triphosphates as substrates. The protein is DNA-directed RNA polymerase subunit beta' of Bacillus thuringiensis (strain Al Hakam).